A 254-amino-acid polypeptide reads, in one-letter code: TLC domain-containing protein At5g14285 (254 aa).

6 helical membrane-spanning segments follow: residues 12-32 (DLPI…FIVF), 45-65 (SCLI…RAVF), 82-101 (TVLD…YIVF), 124-144 (FLVF…EVTS), 172-192 (LSPP…PLFF), and 211-231 (WLWI…ILWI). Residues 38-248 (QIRPEASSCL…FSERKANKIR (211 aa)) enclose the TLC domain.

The protein resides in the membrane. The chain is TLC domain-containing protein At5g14285 from Arabidopsis thaliana (Mouse-ear cress).